We begin with the raw amino-acid sequence, 555 residues long: Glutamine--tRNA ligase (555 aa).

The 'HIGH' region motif lies at 35 to 45 (PEPNGYLHIGH). ATP is bound by residues 36-38 (EPN) and 42-48 (HIGHAKS). Residues aspartate 68 and tyrosine 213 each coordinate L-glutamine. Residues threonine 232 and 262–263 (RL) each bind ATP. A 'KMSKS' region motif is present at residues 269-273 (ITSKR).

This sequence belongs to the class-I aminoacyl-tRNA synthetase family. In terms of assembly, monomer.

It is found in the cytoplasm. It carries out the reaction tRNA(Gln) + L-glutamine + ATP = L-glutaminyl-tRNA(Gln) + AMP + diphosphate. The sequence is that of Glutamine--tRNA ligase from Stutzerimonas stutzeri (strain A1501) (Pseudomonas stutzeri).